Consider the following 769-residue polypeptide: Signal transducer and activator of transcription 3.1 (769 aa).

An Essential for nuclear import motif is present at residues 150 to 162 (DVRKKVQDLEQKM). The SH2 domain occupies 580 to 670 (WNEGYIMGFI…DATNILVSPL (91 aa)). Ser728 bears the Phosphoserine; by NLK mark.

The protein belongs to the transcription factor STAT family. As to quaternary structure, forms a homodimer or a heterodimer with a related family member, such as stat1. Interacts with nlk.2. In terms of processing, phosphorylation of both tyrosine and serine residues, together with dimerization, is required for mesoderm induction.

Its subcellular location is the cytoplasm. It localises to the nucleus. In terms of biological role, transcription factor that binds to target promoter sequences and activates transcription upon il6st/gp130 stimulation. Mediates ventralization of embryos, at least in part via inhibition of smad2 signaling. Required for hairy2 to induce dll1/delta1 and promote neural crest cell proliferation and differentiation. Involved in TGFbeta-mediated mesoderm induction in early embryos, acting downstream of map3k7/tak1 and nlk.2. This is Signal transducer and activator of transcription 3.1 (stat3.1) from Xenopus laevis (African clawed frog).